The chain runs to 410 residues: Pyrophosphate--fructose 6-phosphate 1-phosphotransferase (410 aa).

Glycine 12 serves as a coordination point for diphosphate. Aspartate 121 provides a ligand contact to Mg(2+). Residues 149-151 (TID), 194-196 (MGR), glutamate 266, and 323-326 (YFSR) contribute to the substrate site. The active-site Proton acceptor is the aspartate 151.

Belongs to the phosphofructokinase type A (PFKA) family. PPi-dependent PFK group II subfamily. Clade 'P' sub-subfamily. As to quaternary structure, homodimer or homotetramer. It depends on Mg(2+) as a cofactor.

The protein resides in the cytoplasm. It carries out the reaction beta-D-fructose 6-phosphate + diphosphate = beta-D-fructose 1,6-bisphosphate + phosphate + H(+). It participates in carbohydrate degradation; glycolysis; D-glyceraldehyde 3-phosphate and glycerone phosphate from D-glucose: step 3/4. Non-allosteric. Its function is as follows. Catalyzes the phosphorylation of D-fructose 6-phosphate, the first committing step of glycolysis. Uses inorganic phosphate (PPi) as phosphoryl donor instead of ATP like common ATP-dependent phosphofructokinases (ATP-PFKs), which renders the reaction reversible, and can thus function both in glycolysis and gluconeogenesis. Consistently, PPi-PFK can replace the enzymes of both the forward (ATP-PFK) and reverse (fructose-bisphosphatase (FBPase)) reactions. This Mastigamoeba balamuthi (Phreatamoeba balamuthi) protein is Pyrophosphate--fructose 6-phosphate 1-phosphotransferase.